Consider the following 67-residue polypeptide: UPF0337 protein Atu4724 (67 aa).

The protein belongs to the UPF0337 (CsbD) family.

The chain is UPF0337 protein Atu4724 from Agrobacterium fabrum (strain C58 / ATCC 33970) (Agrobacterium tumefaciens (strain C58)).